The chain runs to 402 residues: Arginine deiminase (402 aa).

The Amidino-cysteine intermediate role is filled by Cys392.

It belongs to the arginine deiminase family.

Its subcellular location is the cytoplasm. The enzyme catalyses L-arginine + H2O = L-citrulline + NH4(+). It functions in the pathway amino-acid degradation; L-arginine degradation via ADI pathway; carbamoyl phosphate from L-arginine: step 1/2. The polypeptide is Arginine deiminase (arcA) (Mycobacterium bovis (strain ATCC BAA-935 / AF2122/97)).